Here is a 370-residue protein sequence, read N- to C-terminus: Putative agmatine deiminase (370 aa).

Positions 1-19 (MTNMNVDATQLTTKPSQDG) are enriched in polar residues. Residues 1-20 (MTNMNVDATQLTTKPSQDGF) are disordered. Residue Cys-361 is the Amidino-cysteine intermediate of the active site.

This sequence belongs to the agmatine deiminase family.

It carries out the reaction agmatine + H2O = N-carbamoylputrescine + NH4(+). This Shewanella frigidimarina (strain NCIMB 400) protein is Putative agmatine deiminase.